The following is a 198-amino-acid chain: uncharacterized protein (198 aa).

This is an uncharacterized protein from Bacillus subtilis (strain 168).